Consider the following 225-residue polypeptide: Prolactin (225 aa).

A signal peptide spans 1–28; it reads MTIQGSDRKGTLLLLVMSNLLFCQNVHP. Cysteine 32 and cysteine 37 are oxidised to a cystine. Residues serine 52 and serine 116 each carry the phosphoserine modification. 2 cysteine pairs are disulfide-bonded: cysteine 84/cysteine 200 and cysteine 217/cysteine 225.

Belongs to the somatotropin/prolactin family. As to quaternary structure, interacts with PRLR.

The protein localises to the secreted. Functionally, prolactin acts primarily on the mammary gland by promoting lactation. This Alexandromys montebelli (Japanese grass vole) protein is Prolactin (PRL).